We begin with the raw amino-acid sequence, 130 residues long: Gonadotropin subunit beta-1 (130 aa).

A signal peptide spans methionine 1–alanine 18. 5 cysteine pairs are disulfide-bonded: cysteine 26-cysteine 74, cysteine 40-cysteine 89, cysteine 51-cysteine 105, cysteine 55-cysteine 107, and cysteine 110-cysteine 117. Asparagine 30 carries N-linked (GlcNAc...) asparagine glycosylation.

This sequence belongs to the glycoprotein hormones subunit beta family. Heterodimer of an alpha and a beta chain.

The protein resides in the secreted. Its function is as follows. Involved in gametogenesis and steroidogenesis. The sequence is that of Gonadotropin subunit beta-1 (cgba) from Cyprinus carpio (Common carp).